The sequence spans 176 residues: MRFFLCSIFMMISPIWPLGENPLPGDPYVIVNKRTNELAVILDNKVEGVYSVATGKTDDLTPEGEFSVTVKAENPYYRKKNIEGGSPDNPLGARWIGFDAKGTDGRIYGIHGTNREESVGKFVSNGCIRMHNDEVVHLFQTIPVGTRVLITDDNRSFEEIAIEHKALIKKQDIPIE.

Residues 1 to 25 form the signal peptide; the sequence is MRFFLCSIFMMISPIWPLGENPLPG. Residues 27–151 form the L,D-TPase catalytic domain; the sequence is PYVIVNKRTN…IPVGTRVLIT (125 aa). The active-site Proton donor/acceptor is the histidine 111. The active-site Nucleophile is cysteine 127.

The protein belongs to the YkuD family.

The protein operates within cell wall biogenesis; peptidoglycan biosynthesis. The protein is Putative L,D-transpeptidase YqjB (yqjB) of Bacillus subtilis (strain 168).